A 149-amino-acid polypeptide reads, in one-letter code: D-aminoacyl-tRNA deacylase (149 aa).

Positions 137 to 138 match the Gly-cisPro motif, important for rejection of L-amino acids motif; the sequence is GP.

Belongs to the DTD family. In terms of assembly, homodimer.

Its subcellular location is the cytoplasm. It catalyses the reaction glycyl-tRNA(Ala) + H2O = tRNA(Ala) + glycine + H(+). It carries out the reaction a D-aminoacyl-tRNA + H2O = a tRNA + a D-alpha-amino acid + H(+). Functionally, an aminoacyl-tRNA editing enzyme that deacylates mischarged D-aminoacyl-tRNAs. Also deacylates mischarged glycyl-tRNA(Ala), protecting cells against glycine mischarging by AlaRS. Acts via tRNA-based rather than protein-based catalysis; rejects L-amino acids rather than detecting D-amino acids in the active site. By recycling D-aminoacyl-tRNA to D-amino acids and free tRNA molecules, this enzyme counteracts the toxicity associated with the formation of D-aminoacyl-tRNA entities in vivo and helps enforce protein L-homochirality. The sequence is that of D-aminoacyl-tRNA deacylase from Clostridium kluyveri (strain ATCC 8527 / DSM 555 / NBRC 12016 / NCIMB 10680 / K1).